Consider the following 963-residue polypeptide: Phosphoenolpyruvate carboxylase 2 (963 aa).

Ser11 carries the phosphoserine modification. Residues His172 and Lys599 contribute to the active site. Residue Ser701 is modified to Phosphoserine.

Belongs to the PEPCase type 1 family. As to quaternary structure, homotetramer. Mg(2+) serves as cofactor. As to expression, expressed in all plant organs, with higher levels in stems and leaves.

Its subcellular location is the cytoplasm. It carries out the reaction oxaloacetate + phosphate = phosphoenolpyruvate + hydrogencarbonate. With respect to regulation, by light-reversible phosphorylation. Its function is as follows. Through the carboxylation of phosphoenolpyruvate (PEP) it forms oxaloacetate, a four-carbon dicarboxylic acid source for the tricarboxylic acid cycle. This chain is Phosphoenolpyruvate carboxylase 2 (PPC2), found in Arabidopsis thaliana (Mouse-ear cress).